The sequence spans 529 residues: Bifunctional purine biosynthesis protein PurH (529 aa).

The 148-residue stretch at 1 to 148 (MQQRRPVRRA…KNHKDVAIVV (148 aa)) folds into the MGS-like domain. Lysine 287 is subject to N6-acetyllysine.

Belongs to the PurH family.

The catalysed reaction is (6R)-10-formyltetrahydrofolate + 5-amino-1-(5-phospho-beta-D-ribosyl)imidazole-4-carboxamide = 5-formamido-1-(5-phospho-D-ribosyl)imidazole-4-carboxamide + (6S)-5,6,7,8-tetrahydrofolate. The enzyme catalyses IMP + H2O = 5-formamido-1-(5-phospho-D-ribosyl)imidazole-4-carboxamide. It participates in purine metabolism; IMP biosynthesis via de novo pathway; 5-formamido-1-(5-phospho-D-ribosyl)imidazole-4-carboxamide from 5-amino-1-(5-phospho-D-ribosyl)imidazole-4-carboxamide (10-formyl THF route): step 1/1. It functions in the pathway purine metabolism; IMP biosynthesis via de novo pathway; IMP from 5-formamido-1-(5-phospho-D-ribosyl)imidazole-4-carboxamide: step 1/1. In Escherichia coli O127:H6 (strain E2348/69 / EPEC), this protein is Bifunctional purine biosynthesis protein PurH.